A 926-amino-acid chain; its full sequence is G-protein coupled receptor family C group 6 member A (926 aa).

The N-terminal stretch at 1 to 18 is a signal peptide; it reads MAFLIILITCFVIILATS. Topologically, residues 19 to 594 are extracellular; the sequence is QPCQTPDDFV…EYLNWNDSLA (576 aa). Asparagine 121, asparagine 259, asparagine 332, asparagine 378, asparagine 452, asparagine 555, asparagine 567, and asparagine 590 each carry an N-linked (GlcNAc...) asparagine glycan. Residues 595 to 615 traverse the membrane as a helical segment; sequence ILLLILSLLGIIFVLVVGIIF. The Cytoplasmic portion of the chain corresponds to 616 to 631; it reads TRNLNTPVVKSSGGLR. A helical membrane pass occupies residues 632-652; it reads VCYVILLCHFLNFASTSFFIG. At 653–669 the chain is on the extracellular side; sequence EPQDFTCKTRQTMFGVS. Residues 670–690 traverse the membrane as a helical segment; that stretch reads FTLCISCILTKSLKILLAFSF. The Cytoplasmic segment spans residues 691–704; it reads DPKLQKFLKCLYRP. A helical membrane pass occupies residues 705–725; sequence ILIIFTCTGIQVVICTLWLIF. Residues 726–748 are Extracellular-facing; it reads AAPTVEVNVSLPRVIILECEEGS. N-linked (GlcNAc...) asparagine glycosylation occurs at asparagine 733. A helical transmembrane segment spans residues 749–769; the sequence is ILAFGTMLGYIAILAFICFIF. Over 770–782 the chain is Cytoplasmic; that stretch reads AFKGKYENYNEAK. The helical transmembrane segment at 783–803 threads the bilayer; the sequence is FITFGMLIYFIAWITFIPIYA. Residues 804 to 810 lie on the Extracellular side of the membrane; sequence TTFGKYV. Residues 811 to 831 form a helical membrane-spanning segment; sequence PAVEIIVILISNYGILYCTFI. At 832–926 the chain is on the cytoplasmic side; the sequence is PKCYVIICKQ…TLPRKRMSSI (95 aa).

It belongs to the G-protein coupled receptor 3 family. In terms of assembly, homodimer; disulfide-linked. In terms of tissue distribution, isoform 1 is expressed at high level in brain, skeletal muscle, testis, bone, calvaria, osteoblasts and leukocytes. Expressed at intermediate level in liver, heart, kidney and spleen. Expressed at low level in lung, pancreas, placenta and ovary. Not detected in thymus, prostate, small intestine, tongue and colon. Isoform 1 and isoform 2 are expressed in kidney at the same level. Isoform 2 is expressed at lower level than isoform 1 in the other tissues.

The protein resides in the cell membrane. Functionally, receptor activated by multiple ligands, including osteocalcin (BGLAP), basic amino acids, and various cations. Activated by amino acids with a preference for basic amino acids such as L-Lys, L-Arg and L-ornithine but also by small and polar amino acids. The L-alpha amino acids respond is augmented by divalent cations Ca(2+) and Mg(2+). Seems to act through a G(q)/G(11) and G(i)-coupled pathway. Regulates testosterone production by acting as a ligand for uncarboxylated osteocalcin hormone: osteocalcin-binding at the surface of Leydig cells initiates a signaling response that promotes the expression of enzymes required for testosterone synthesis in a CREB-dependent manner. Mediates the non-genomic effects of androgens in multiple tissue. May coordinate nutritional and hormonal anabolic signals through the sensing of extracellular amino acids, osteocalcin, divalent ions and its responsiveness to anabolic steroids. The chain is G-protein coupled receptor family C group 6 member A (GPRC6A) from Homo sapiens (Human).